Consider the following 288-residue polypeptide: Nucleotide-binding protein Pcar_1935 (288 aa).

11–18 (GLSGSGKT) is an ATP binding site. 62 to 65 (DVRN) is a binding site for GTP.

This sequence belongs to the RapZ-like family.

Displays ATPase and GTPase activities. This chain is Nucleotide-binding protein Pcar_1935, found in Syntrophotalea carbinolica (strain DSM 2380 / NBRC 103641 / GraBd1) (Pelobacter carbinolicus).